A 131-amino-acid polypeptide reads, in one-letter code: Transcription antitermination protein NusB (131 aa).

It belongs to the NusB family.

In terms of biological role, involved in transcription antitermination. Required for transcription of ribosomal RNA (rRNA) genes. Binds specifically to the boxA antiterminator sequence of the ribosomal RNA (rrn) operons. This is Transcription antitermination protein NusB from Caldicellulosiruptor saccharolyticus (strain ATCC 43494 / DSM 8903 / Tp8T 6331).